Consider the following 475-residue polypeptide: Ribulose bisphosphate carboxylase large chain (475 aa).

The propeptide occupies 1–2; it reads MS. An N-acetylproline modification is found at proline 3. The residue at position 14 (lysine 14) is an N6,N6,N6-trimethyllysine. Residues asparagine 123 and threonine 173 each contribute to the substrate site. Lysine 175 acts as the Proton acceptor in catalysis. Residue lysine 177 participates in substrate binding. Positions 201, 203, and 204 each coordinate Mg(2+). Lysine 201 is modified (N6-carboxylysine). The active-site Proton acceptor is the histidine 294. 3 residues coordinate substrate: arginine 295, histidine 327, and serine 379.

It belongs to the RuBisCO large chain family. Type I subfamily. Heterohexadecamer of 8 large chains and 8 small chains; disulfide-linked. The disulfide link is formed within the large subunit homodimers. The cofactor is Mg(2+). The disulfide bond which can form in the large chain dimeric partners within the hexadecamer appears to be associated with oxidative stress and protein turnover.

The protein localises to the plastid. Its subcellular location is the chloroplast. It catalyses the reaction 2 (2R)-3-phosphoglycerate + 2 H(+) = D-ribulose 1,5-bisphosphate + CO2 + H2O. The enzyme catalyses D-ribulose 1,5-bisphosphate + O2 = 2-phosphoglycolate + (2R)-3-phosphoglycerate + 2 H(+). In terms of biological role, ruBisCO catalyzes two reactions: the carboxylation of D-ribulose 1,5-bisphosphate, the primary event in carbon dioxide fixation, as well as the oxidative fragmentation of the pentose substrate in the photorespiration process. Both reactions occur simultaneously and in competition at the same active site. This is Ribulose bisphosphate carboxylase large chain from Ostrya virginiana (American hophornbeam).